Consider the following 128-residue polypeptide: Cyclic ether formation enzyme gkaZ (128 aa).

Positions 1–36 (MTTARALSDGLAYLLACFNAFCIQAHLTSRFSPAFS) are cleaved as a signal peptide. Helical transmembrane passes span 61-81 (LRYM…LPGW) and 107-127 (WLLH…AIYV).

This sequence belongs to the cyclic ether formation enzyme xenC family.

It is found in the membrane. It participates in mycotoxin biosynthesis. Functionally, cyclic ether formation enzyme; part of the gene cluster that mediates the biosynthesis of GKK1032, fungal natural products containing a macrocyclic para-cyclophane connected to a decahydrofluorene ring system that show potent antitumor activities. Within the pathway, gkaZ functions synergistically with gkaB and gkaX to form the cyclophane. The pathway begins with the PKS-NRPS gkaA which, with the help of the trans-enoyl reductase gkaC, synthesizes the polyketide-tyrosyl acyl thioester product which can be reductively off-loaded by the terminal reductase (R) domain in gkaA. The alpha/beta hydrolase gkaG is then required to catalyze the subsequent Knoevenagel condensation that affords the 3-pyrrolin-2-one ring, whereas the three proteins gkaB, gkaX and gkaZ then function synergistically to form the cyclophane. This is Cyclic ether formation enzyme gkaZ from Penicillium citrinum.